Reading from the N-terminus, the 451-residue chain is Chromosomal replication initiator protein DnaA (451 aa).

A domain I, interacts with DnaA modulators region spans residues 1–77 (MTENEQIFWN…EVYNAQISVD (77 aa)). Residues 77 to 110 (DYVFEEDLMIEQNQTKINQKPKQQALNSLPTVTS) form a domain II region. The tract at residues 111-329 (DLNSKYSFEN…GALKDISLGA (219 aa)) is domain III, AAA+ region. ATP is bound by residues Gly155, Gly157, Lys158, and Thr159. The segment at 330–451 (NFKQIDTITV…EIETIKNKIK (122 aa)) is domain IV, binds dsDNA.

This sequence belongs to the DnaA family. Oligomerizes as a right-handed, spiral filament on DNA at oriC.

It is found in the cytoplasm. Functionally, plays an essential role in the initiation and regulation of chromosomal replication. ATP-DnaA binds to the origin of replication (oriC) to initiate formation of the DNA replication initiation complex once per cell cycle. Binds the DnaA box (a 9 base pair repeat at the origin) and separates the double-stranded (ds)DNA. Forms a right-handed helical filament on oriC DNA; dsDNA binds to the exterior of the filament while single-stranded (ss)DNA is stabiized in the filament's interior. The ATP-DnaA-oriC complex binds and stabilizes one strand of the AT-rich DNA unwinding element (DUE), permitting loading of DNA polymerase. After initiation quickly degrades to an ADP-DnaA complex that is not apt for DNA replication. Binds acidic phospholipids. In Streptococcus pyogenes serotype M49 (strain NZ131), this protein is Chromosomal replication initiator protein DnaA.